A 308-amino-acid polypeptide reads, in one-letter code: Autophagy-related protein 3 (308 aa).

Positions 83 to 159 are flexible region; that stretch reads NFVETQTTET…NELADDDDDI (77 aa). The interval 89 to 121 is disordered; that stretch reads TTETRDVGDGWELEGQSEGERESGREDTKSNEE. Residues 106–120 are compositionally biased toward basic and acidic residues; sequence EGERESGREDTKSNE. Cys-235 serves as the catalytic Glycyl thioester intermediate. The handle region stretch occupies residues 239–283; sequence NVMKVLMEKVRASRHRARDTEAQKNAEEDWEDLQSDIDDGLRVDQ.

Belongs to the ATG3 family. As to quaternary structure, monomer. Interacts with ATG8 through an intermediate thioester bond between Cys-235 and the C-terminal Gly of ATG8. Interacts with the C-terminal region of the E1-like ATG7 enzyme. Also interacts with the ATG12-ATG5 conjugate.

The protein resides in the cytoplasm. E2 conjugating enzyme required for the cytoplasm to vacuole transport (Cvt) and autophagy. Required for selective autophagic degradation of the nucleus (nucleophagy) as well as for mitophagy which contributes to regulate mitochondrial quantity and quality by eliminating the mitochondria to a basal level to fulfill cellular energy requirements and preventing excess ROS production. Responsible for the E2-like covalent binding of phosphatidylethanolamine to the C-terminal Gly of ATG8. The ATG12-ATG5 conjugate plays a role of an E3 and promotes the transfer of ATG8 from ATG3 to phosphatidylethanolamine (PE). This step is required for the membrane association of ATG8. The formation of the ATG8-phosphatidylethanolamine conjugate is essential for autophagy and for the cytoplasm to vacuole transport (Cvt). The ATG8-PE conjugate mediates tethering between adjacent membranes and stimulates membrane hemifusion, leading to expansion of the autophagosomal membrane during autophagy. The chain is Autophagy-related protein 3 from Kluyveromyces marxianus (strain DMKU3-1042 / BCC 29191 / NBRC 104275) (Yeast).